A 327-amino-acid chain; its full sequence is Putative gluconeogenesis factor (327 aa).

It belongs to the gluconeogenesis factor family.

Its subcellular location is the cytoplasm. Required for morphogenesis under gluconeogenic growth conditions. The sequence is that of Putative gluconeogenesis factor (yjiF) from Lactococcus lactis subsp. lactis (strain IL1403) (Streptococcus lactis).